Reading from the N-terminus, the 192-residue chain is MKLLEERIKKDGVVLPGNVLKVNQFLNHQIDPELMYKMGEEFARLFKDEEITKIITVESSGIAPAVMTGLVMKLPVVFARKHKSLTLVDNLYTSDVYSYTKKVTNTISVDKKFLTSDDKVLVIDDFLANGQAVQGIFNICDAAGAEIKGVGIVIEKSFQEGAKIIHDRGVRLESLAVISSFDDNQVHFEGEE.

Residues L20 and N27 each contribute to the xanthine site. Position 128–132 (128–132 (ANGQA)) interacts with 5-phospho-alpha-D-ribose 1-diphosphate. Residue K156 participates in xanthine binding.

This sequence belongs to the purine/pyrimidine phosphoribosyltransferase family. Xpt subfamily. Homodimer.

Its subcellular location is the cytoplasm. The catalysed reaction is XMP + diphosphate = xanthine + 5-phospho-alpha-D-ribose 1-diphosphate. The protein operates within purine metabolism; XMP biosynthesis via salvage pathway; XMP from xanthine: step 1/1. Functionally, converts the preformed base xanthine, a product of nucleic acid breakdown, to xanthosine 5'-monophosphate (XMP), so it can be reused for RNA or DNA synthesis. The polypeptide is Xanthine phosphoribosyltransferase (Ligilactobacillus salivarius (strain UCC118) (Lactobacillus salivarius)).